The primary structure comprises 1450 residues: M-protein, striated muscle (1450 aa).

The disordered stretch occupies residues 66 to 87; sequence AHEAMQESRKRTHEQKSHASDE. 2 consecutive Ig-like C2-type domains span residues 142 to 233 and 254 to 359; these read PEIL…CAVV and PLSY…AFLF. Fibronectin type-III domains lie at 373–468, 501–596, 602–695, 698–800, and 803–900; these read APMD…ALDP, PPTN…PQDI, APGR…VQAA, CPSY…TMPE, and PAYD…ASPG. 5 Ig-like C2-type domains span residues 899-995, 1002-1115, 1118-1204, 1225-1322, and 1333-1422; these read PGTK…LMTL, PTIP…FLRK, PHFS…LELS, PLKI…QRLK, and KVIG…VTVS.

Expressed in pectoralis and cardiac muscle.

In terms of biological role, is a structural constituent of myofibrillar M-band in striated muscle. The polypeptide is M-protein, striated muscle (Gallus gallus (Chicken)).